The following is a 24-amino-acid chain: Flavin reductase (NADPH) (24 aa).

NADP(+)-binding residues include Gly9, Thr11, Gly12, and Thr14.

It belongs to the BLVRB family. As to quaternary structure, monomer. As to expression, detected in erythrocytes (at protein level).

The protein localises to the cytoplasm. The catalysed reaction is reduced riboflavin + NADP(+) = riboflavin + NADPH + 2 H(+). It catalyses the reaction bilirubin IXbeta + NADP(+) = biliverdin IXbeta + NADPH + H(+). It carries out the reaction FMNH2 + NAD(+) = FMN + NADH + 2 H(+). The enzyme catalyses FMNH2 + NADP(+) = FMN + NADPH + 2 H(+). The catalysed reaction is S-nitroso-CoA + L-cysteinyl-[protein] = S-nitroso-L-cysteinyl-[protein] + CoA. It catalyses the reaction L-cysteinyl-[SCAN] + S-nitroso-CoA = S-nitroso-L-cysteinyl-[SCAN] + CoA. It carries out the reaction S-nitroso-L-cysteinyl-[SCAN] + L-cysteinyl-[protein] = L-cysteinyl-[SCAN] + S-nitroso-L-cysteinyl-[protein]. Enzyme that can both act as a NAD(P)H-dependent reductase and a S-nitroso-CoA-dependent nitrosyltransferase. Promotes fetal heme degradation during development. Also expressed in adult tissues, where it acts as a regulator of hematopoiesis, intermediary metabolism (glutaminolysis, glycolysis, TCA cycle and pentose phosphate pathway) and insulin signaling. Has a broad specificity oxidoreductase activity by catalyzing the NAD(P)H-dependent reduction of a variety of flavins, such as riboflavin, FAD or FMN, biliverdins, methemoglobin and PQQ (pyrroloquinoline quinone). Contributes to fetal heme catabolism by catalyzing reduction of biliverdin IXbeta into bilirubin IXbeta in the liver. Biliverdin IXbeta, which constitutes the major heme catabolite in the fetus is not present in adult. Does not reduce bilirubin IXalpha. Can also reduce the complexed Fe(3+) iron to Fe(2+) in the presence of FMN and NADPH. Acts as a protein nitrosyltransferase by catalyzing nitrosylation of cysteine residues of target proteins, such as HMOX2, INSR and IRS1. S-nitroso-CoA-dependent nitrosyltransferase activity is mediated via a 'ping-pong' mechanism: BLVRB first associates with both S-nitroso-CoA and protein substrate, nitric oxide group is then transferred from S-nitroso-CoA to Cys residues of BLVRB and from S-nitroso-BLVRB to the protein substrate. Inhibits insulin signaling by mediating nitrosylation of INSR and IRS1, leading to their inhibition. The chain is Flavin reductase (NADPH) (BLVRB) from Aquarana catesbeiana (American bullfrog).